Here is a 479-residue protein sequence, read N- to C-terminus: BURP domain-containing protein 4 (479 aa).

The signal sequence occupies residues 1-46 (MVGKGNECAAARRRFSLRAAAASSSSSSFLPCLLLAAALSAGCCRA). The interval 158-177 (RADGPPKQPATFPASPNGEK) is disordered. A BURP domain is found at 254–479 (LFLMKKLHPG…PQGYVLWLAN (226 aa)). Residue Asn-445 is glycosylated (N-linked (GlcNAc...) asparagine).

Expressed in stamen.

In Oryza sativa subsp. japonica (Rice), this protein is BURP domain-containing protein 4 (BURP4).